Reading from the N-terminus, the 131-residue chain is Fluoride-specific ion channel FluC 2 (131 aa).

4 helical membrane-spanning segments follow: residues 5 to 25 (FGVAVGGALGALARYGVSLLV), 39 to 59 (LATLLVNVLGSFLLAFITTLA), 70 to 90 (LAVGTGFIGALTTFSTFAWES), and 104 to 124 (LYVLGNLVLGYAAVLLGRALA). Residues Gly78 and Thr81 each coordinate Na(+).

The protein belongs to the fluoride channel Fluc/FEX (TC 1.A.43) family.

Its subcellular location is the cell membrane. It catalyses the reaction fluoride(in) = fluoride(out). With respect to regulation, na(+) is not transported, but it plays an essential structural role and its presence is essential for fluoride channel function. Its function is as follows. Fluoride-specific ion channel. Important for reducing fluoride concentration in the cell, thus reducing its toxicity. The polypeptide is Fluoride-specific ion channel FluC 2 (Deinococcus geothermalis (strain DSM 11300 / CIP 105573 / AG-3a)).